The sequence spans 304 residues: GTPase Era (304 aa).

The Era-type G domain occupies 11–179 (YCGFIAIVGR…QKIVRKSLRE (169 aa)). The G1 stretch occupies residues 19-26 (GRPNVGKS). 19–26 (GRPNVGKS) provides a ligand contact to GTP. The G2 stretch occupies residues 45 to 49 (QTTRH). Positions 66–69 (DTPG) are G3. Residues 66 to 70 (DTPGL) and 128 to 131 (NKVD) each bind GTP. The interval 128 to 131 (NKVD) is G4. Residues 158–160 (ISA) form a G5 region. Residues 210–287 (TGEELPYSVT…HLELWVKVKA (78 aa)) enclose the KH type-2 domain.

This sequence belongs to the TRAFAC class TrmE-Era-EngA-EngB-Septin-like GTPase superfamily. Era GTPase family. Monomer.

The protein resides in the cytoplasm. Its subcellular location is the cell inner membrane. In terms of biological role, an essential GTPase that binds both GDP and GTP, with rapid nucleotide exchange. Plays a role in 16S rRNA processing and 30S ribosomal subunit biogenesis and possibly also in cell cycle regulation and energy metabolism. This is GTPase Era from Haemophilus ducreyi (strain 35000HP / ATCC 700724).